Reading from the N-terminus, the 655-residue chain is Putative sensor protein Sfri_3689 (655 aa).

The signal sequence occupies residues 1 to 17; that stretch reads MKTLLLLLIIITMPVLA. The helical transmembrane segment at 252-272 threads the bilayer; sequence FALAILVAIMSAIGMIFTGFI. Positions 419–653 constitute a Histidine kinase domain; the sequence is GIAHEINNPT…QIRLIFALAQ (235 aa). The residue at position 422 (His-422) is a Phosphohistidine; by autocatalysis.

The protein localises to the cell membrane. The enzyme catalyses ATP + protein L-histidine = ADP + protein N-phospho-L-histidine.. In Shewanella frigidimarina (strain NCIMB 400), this protein is Putative sensor protein Sfri_3689.